Reading from the N-terminus, the 343-residue chain is Aspartate carbamoyltransferase catalytic subunit (343 aa).

Residues arginine 91 and threonine 92 each contribute to the carbamoyl phosphate site. Lysine 119 contributes to the L-aspartate binding site. Carbamoyl phosphate contacts are provided by arginine 141, histidine 171, and glutamine 174. The L-aspartate site is built by arginine 204 and arginine 259. Residues glycine 300 and proline 301 each coordinate carbamoyl phosphate.

This sequence belongs to the aspartate/ornithine carbamoyltransferase superfamily. ATCase family. As to quaternary structure, heterododecamer (2C3:3R2) of six catalytic PyrB chains organized as two trimers (C3), and six regulatory PyrI chains organized as three dimers (R2).

It catalyses the reaction carbamoyl phosphate + L-aspartate = N-carbamoyl-L-aspartate + phosphate + H(+). It functions in the pathway pyrimidine metabolism; UMP biosynthesis via de novo pathway; (S)-dihydroorotate from bicarbonate: step 2/3. Functionally, catalyzes the condensation of carbamoyl phosphate and aspartate to form carbamoyl aspartate and inorganic phosphate, the committed step in the de novo pyrimidine nucleotide biosynthesis pathway. This is Aspartate carbamoyltransferase catalytic subunit from Burkholderia ambifaria (strain MC40-6).